Here is a 910-residue protein sequence, read N- to C-terminus: MLKVFEKIFGSYSDREVKRIKPIIDRIEALEPEMQALSDEQLKAKTPEFKRRLSQGETLDDLLPEAFAVVREASRRVLGMRHFRVQLIGGVVLHQGRIAEMKTGEGKTLVATLPVYLNALEGKGVHVVTVNDYLATRDSEWMGKLYNFLGLSVGLIVHGLTNEERKKAYSCDITYGTNNEFGFDYLRDNMVIYKEDMVQRDLHFAIVDEVDSILIDEARTPLIISGVGDKSTDLYTRADAFVRRLKVKVFTELDDKEQTDDIEADYIVDEKANTATLTASGVKKAEEFFGIQNLSDPDNMTISHHINQALRAHGLMKRDRDYVVKDDQVIIVDEFTGRLMYGRRYSNGLHQAIEAKEGVKVERESKTLASITFQNYFRMYRKLSGMTGTAQTEEQEFRSIYNLDVVVIPTNMPVIRVDHPDSVYKNERGKFNAVINQVIECHKKGQPVLIGTISIEKSELLSSMLKRHGIPHQVLNAKYHEKEAEIIAQAGKLGAVTIATNMAGRGTDILLGGNPEFMAKQEMRKRGFREDVINQATGFNDTNDPEILEARKVYRELYEGFKKITDAEREKVVAAGGLFIIGTERHESRRIDNQLRGRAGRQGDPGESRFYISLEDDLMRLFGSDRLMGMVEALGLEEDQPIEHKMLSNAIENAQKRVESRNFAIRKSVLEYDDVMNKQREVIYAQRRKVLNGENLKENIVKMMENIADYIVNLFCSENPHPDFWDWEGIRSYTEKAYVPEGTLDFSKEQMEDLNKEKLRQIILDSMLKRYEEKEKEFGSELMRELERVVLLRVVDQKWMDHIDDMDQLQHGVRLRAYGHKDPVIEYKFESFEMFEEMNRNIQSDVVRIILNTHIDRNRMPQRQKVAEPVTASHGEEVRKPVVKRNKVGRNELCPCGSGKKYKKCCGIDE.

Residues Q86, 104–108 (GEGKT), and D508 each bind ATP. Zn(2+)-binding residues include C894, C896, C905, and C906.

The protein belongs to the SecA family. Monomer and homodimer. Part of the essential Sec protein translocation apparatus which comprises SecA, SecYEG and auxiliary proteins SecDF. Other proteins may also be involved. Zn(2+) is required as a cofactor.

Its subcellular location is the cell membrane. It is found in the cytoplasm. The catalysed reaction is ATP + H2O + cellular proteinSide 1 = ADP + phosphate + cellular proteinSide 2.. Part of the Sec protein translocase complex. Interacts with the SecYEG preprotein conducting channel. Has a central role in coupling the hydrolysis of ATP to the transfer of proteins into and across the cell membrane, serving as an ATP-driven molecular motor driving the stepwise translocation of polypeptide chains across the membrane. This Acetivibrio thermocellus (strain ATCC 27405 / DSM 1237 / JCM 9322 / NBRC 103400 / NCIMB 10682 / NRRL B-4536 / VPI 7372) (Clostridium thermocellum) protein is Protein translocase subunit SecA.